We begin with the raw amino-acid sequence, 793 residues long: Alanine--tRNA ligase, mitochondrial (793 aa).

Residues arginine 88, tryptophan 187, and 224–226 (IWN) each bind ATP. Positions 226 and 249 each coordinate L-alanine. An ATP-binding site is contributed by glycine 253. Histidine 594, histidine 598, cysteine 706, and histidine 710 together coordinate Zn(2+).

It belongs to the class-II aminoacyl-tRNA synthetase family. In terms of assembly, monomer. Requires Zn(2+) as cofactor.

Its subcellular location is the mitochondrion. It carries out the reaction tRNA(Ala) + L-alanine + ATP = L-alanyl-tRNA(Ala) + AMP + diphosphate. Functionally, catalyzes the attachment of alanine to tRNA(Ala) in a two-step reaction: alanine is first activated by ATP to form Ala-AMP and then transferred to the acceptor end of tRNA(Ala). Also edits incorrectly charged tRNA(Ala) via its editing domain. The sequence is that of Alanine--tRNA ligase, mitochondrial from Caenorhabditis elegans.